Consider the following 466-residue polypeptide: Adenosylhomocysteinase (466 aa).

3 residues coordinate substrate: threonine 57, aspartate 132, and glutamate 192. 193 to 195 (TTT) is a binding site for NAD(+). Residues lysine 222 and aspartate 226 each contribute to the substrate site. Residues asparagine 227, 256-261 (GYGDVG), glutamate 279, asparagine 314, 335-337 (IGH), and asparagine 380 contribute to the NAD(+) site.

This sequence belongs to the adenosylhomocysteinase family. It depends on NAD(+) as a cofactor.

Its subcellular location is the cytoplasm. The enzyme catalyses S-adenosyl-L-homocysteine + H2O = L-homocysteine + adenosine. It functions in the pathway amino-acid biosynthesis; L-homocysteine biosynthesis; L-homocysteine from S-adenosyl-L-homocysteine: step 1/1. Its function is as follows. May play a key role in the regulation of the intracellular concentration of adenosylhomocysteine. The polypeptide is Adenosylhomocysteinase (Brucella melitensis biotype 2 (strain ATCC 23457)).